We begin with the raw amino-acid sequence, 542 residues long: Ribonuclease Y (542 aa).

Residues 1 to 21 form a helical membrane-spanning segment; the sequence is MLIALIAVSVLAVAAIIGSLA. The interval 52–92 is disordered; it reads SRASQDLADSRKDVAKARAELESSRTRASDEARRADNADQA. The segment covering 59 to 92 has biased composition (basic and acidic residues); that stretch reads ADSRKDVAKARAELESSRTRASDEARRADNADQA. A KH domain is found at 229 to 289; that stretch reads VVSVVPLPSN…MRREVARQAL (61 aa). The region spanning 355-449 is the HD domain; that stretch reads VLDHCVECAR…VKAADAISAA (95 aa).

The protein belongs to the RNase Y family.

Its subcellular location is the cell membrane. In terms of biological role, endoribonuclease that initiates mRNA decay. The polypeptide is Ribonuclease Y (Cutibacterium acnes (strain DSM 16379 / KPA171202) (Propionibacterium acnes)).